A 424-amino-acid polypeptide reads, in one-letter code: Enolase (424 aa).

Residue Gln-163 participates in (2R)-2-phosphoglycerate binding. Glu-205 (proton donor) is an active-site residue. Mg(2+) is bound by residues Asp-242, Glu-285, and Asp-312. The (2R)-2-phosphoglycerate site is built by Lys-337, Arg-366, Ser-367, and Lys-388. The active-site Proton acceptor is Lys-337.

Belongs to the enolase family. The cofactor is Mg(2+).

It is found in the cytoplasm. The protein resides in the secreted. The protein localises to the cell surface. It carries out the reaction (2R)-2-phosphoglycerate = phosphoenolpyruvate + H2O. It participates in carbohydrate degradation; glycolysis; pyruvate from D-glyceraldehyde 3-phosphate: step 4/5. Functionally, catalyzes the reversible conversion of 2-phosphoglycerate (2-PG) into phosphoenolpyruvate (PEP). It is essential for the degradation of carbohydrates via glycolysis. The chain is Enolase from Dinoroseobacter shibae (strain DSM 16493 / NCIMB 14021 / DFL 12).